The primary structure comprises 317 residues: UDP-3-O-acylglucosamine N-acyltransferase (317 aa).

The active-site Proton acceptor is histidine 229.

The protein belongs to the transferase hexapeptide repeat family. LpxD subfamily. As to quaternary structure, homotrimer.

The enzyme catalyses a UDP-3-O-[(3R)-3-hydroxyacyl]-alpha-D-glucosamine + a (3R)-hydroxyacyl-[ACP] = a UDP-2-N,3-O-bis[(3R)-3-hydroxyacyl]-alpha-D-glucosamine + holo-[ACP] + H(+). The protein operates within bacterial outer membrane biogenesis; LPS lipid A biosynthesis. Functionally, catalyzes the N-acylation of UDP-3-O-acylglucosamine using 3-hydroxyacyl-ACP as the acyl donor. Is involved in the biosynthesis of lipid A, a phosphorylated glycolipid that anchors the lipopolysaccharide to the outer membrane of the cell. This Campylobacter curvus (strain 525.92) protein is UDP-3-O-acylglucosamine N-acyltransferase.